Here is a 267-residue protein sequence, read N- to C-terminus: Mannose-specific lectin 1 (267 aa).

The N-terminal stretch at 1–26 (MAKLLLFLLPAILGLLVPPRSWSAVA) is a signal peptide. Bulb-type lectin domains lie at 29–134 (TNYL…PSVP) and 148–255 (NNLL…PQAK). Residues 54–58 (QDDCN), tyrosine 62, tryptophan 66, glutamine 67, 173–177 (QGDCN), tyrosine 181, and 185–188 (YGWQ) each bind beta-D-mannose. The Carbohydrate-binding motif 1 motif lies at 54–62 (QDDCNLVLY). 2 cysteine pairs are disulfide-bonded: cysteine 57-cysteine 77 and cysteine 176-cysteine 198. The Carbohydrate-binding motif 2 signature appears at 173–181 (QGDCNLVLY).

Forms heterotetramer of 2 chains 1 and 2 chains 2 arranged as a dimer of chain 1 and chain 2 heterodimers.

It localises to the secreted. Its function is as follows. Mannose-specific lectin. Shows agglutinating activity towards erythrocytes from rabbit. In Colocasia esculenta (Wild taro), this protein is Mannose-specific lectin 1.